Here is a 296-residue protein sequence, read N- to C-terminus: Probable DNA-directed RNA polymerase III subunit RPC6 (296 aa).

It belongs to the eukaryotic RPC34/RPC39 RNA polymerase subunit family.

It localises to the nucleus. In terms of biological role, DNA-dependent RNA polymerase catalyzes the transcription of DNA into RNA using the four ribonucleoside triphosphates as substrates. Specific peripheric component of RNA polymerase III which synthesizes small RNAs, such as 5S rRNA and tRNAs. This chain is Probable DNA-directed RNA polymerase III subunit RPC6, found in Caenorhabditis elegans.